A 76-amino-acid chain; its full sequence is Acyl carrier protein (76 aa).

Residues 1 to 76 enclose the Carrier domain; the sequence is MALLDDVKAV…DAIKYIENNA (76 aa). S36 bears the O-(pantetheine 4'-phosphoryl)serine mark.

The protein belongs to the acyl carrier protein (ACP) family. Post-translationally, 4'-phosphopantetheine is transferred from CoA to a specific serine of apo-ACP by AcpS. This modification is essential for activity because fatty acids are bound in thioester linkage to the sulfhydryl of the prosthetic group.

It localises to the cytoplasm. Its pathway is lipid metabolism; fatty acid biosynthesis. Its function is as follows. Carrier of the growing fatty acid chain in fatty acid biosynthesis. This chain is Acyl carrier protein, found in Aliarcobacter butzleri (strain RM4018) (Arcobacter butzleri).